The primary structure comprises 123 residues: Small ribosomal subunit protein uS12 (123 aa).

Residue Asp-89 is modified to 3-methylthioaspartic acid.

Belongs to the universal ribosomal protein uS12 family. Part of the 30S ribosomal subunit. Contacts proteins S8 and S17. May interact with IF1 in the 30S initiation complex.

Functionally, with S4 and S5 plays an important role in translational accuracy. Interacts with and stabilizes bases of the 16S rRNA that are involved in tRNA selection in the A site and with the mRNA backbone. Located at the interface of the 30S and 50S subunits, it traverses the body of the 30S subunit contacting proteins on the other side and probably holding the rRNA structure together. The combined cluster of proteins S8, S12 and S17 appears to hold together the shoulder and platform of the 30S subunit. The protein is Small ribosomal subunit protein uS12 of Sinorhizobium medicae (strain WSM419) (Ensifer medicae).